Reading from the N-terminus, the 387-residue chain is Erythronate-4-phosphate dehydrogenase (387 aa).

Substrate is bound by residues Ser-45 and Thr-67. An NAD(+)-binding site is contributed by Asp-147. Arg-208 is an active-site residue. Asp-232 lines the NAD(+) pocket. Glu-237 is an active-site residue. Residue His-254 is the Proton donor of the active site. Position 257 (Gly-257) interacts with NAD(+). Tyr-258 is a binding site for substrate.

Belongs to the D-isomer specific 2-hydroxyacid dehydrogenase family. PdxB subfamily. In terms of assembly, homodimer.

The protein resides in the cytoplasm. The enzyme catalyses 4-phospho-D-erythronate + NAD(+) = (R)-3-hydroxy-2-oxo-4-phosphooxybutanoate + NADH + H(+). Its pathway is cofactor biosynthesis; pyridoxine 5'-phosphate biosynthesis; pyridoxine 5'-phosphate from D-erythrose 4-phosphate: step 2/5. In terms of biological role, catalyzes the oxidation of erythronate-4-phosphate to 3-hydroxy-2-oxo-4-phosphonooxybutanoate. In Shewanella woodyi (strain ATCC 51908 / MS32), this protein is Erythronate-4-phosphate dehydrogenase.